The following is a 531-amino-acid chain: Peptide chain release factor 3 (531 aa).

In terms of domain architecture, tr-type G spans 10-278 (RRRRTFAIIS…SLIDWAPAPK (269 aa)). GTP is bound by residues 19–26 (SHPDAGKT), 87–91 (DTPGH), and 141–144 (NKYD).

Belongs to the TRAFAC class translation factor GTPase superfamily. Classic translation factor GTPase family. PrfC subfamily.

The protein resides in the cytoplasm. Its function is as follows. Increases the formation of ribosomal termination complexes and stimulates activities of RF-1 and RF-2. It binds guanine nucleotides and has strong preference for UGA stop codons. It may interact directly with the ribosome. The stimulation of RF-1 and RF-2 is significantly reduced by GTP and GDP, but not by GMP. In Neisseria meningitidis serogroup C / serotype 2a (strain ATCC 700532 / DSM 15464 / FAM18), this protein is Peptide chain release factor 3.